The chain runs to 179 residues: Outer-membrane lipoprotein carrier protein (179 aa).

Positions 1–22 (MEVLRRYVLVFTSLCMTLFAWG) are cleaved as a signal peptide.

The protein belongs to the LolA family. As to quaternary structure, monomer.

The protein resides in the periplasm. Participates in the translocation of lipoproteins from the inner membrane to the outer membrane. Only forms a complex with a lipoprotein if the residue after the N-terminal Cys is not an aspartate (The Asp acts as a targeting signal to indicate that the lipoprotein should stay in the inner membrane). In Helicobacter hepaticus (strain ATCC 51449 / 3B1), this protein is Outer-membrane lipoprotein carrier protein.